A 275-amino-acid chain; its full sequence is NAD(P)H-hydrate epimerase (275 aa).

The YjeF N-terminal domain maps to 49 to 258 (AIKIDQELFS…ALAAKYELNL (210 aa)). Position 102 to 106 (102 to 106 (NNGGD)) interacts with (6S)-NADPHX. 2 residues coordinate K(+): Asn-103 and Asp-167. Residues 171–177 (GFSFKPP) and Asp-200 each bind (6S)-NADPHX. Position 203 (Ser-203) interacts with K(+).

This sequence belongs to the NnrE/AIBP family. K(+) is required as a cofactor.

The enzyme catalyses (6R)-NADHX = (6S)-NADHX. It carries out the reaction (6R)-NADPHX = (6S)-NADPHX. Catalyzes the epimerization of the S- and R-forms of NAD(P)HX, a damaged form of NAD(P)H that is a result of enzymatic or heat-dependent hydration. This is a prerequisite for the S-specific NAD(P)H-hydrate dehydratase to allow the repair of both epimers of NAD(P)HX. The chain is NAD(P)H-hydrate epimerase from Ixodes scapularis (Black-legged tick).